The chain runs to 424 residues: Dual-specificity RNA methyltransferase RlmN (424 aa).

The active-site Proton acceptor is E132. A Radical SAM core domain is found at 138 to 388; that stretch reads GPDRGTLCVS…VRTPRGRDIL (251 aa). A disulfide bond links C145 and C391. Positions 152, 156, and 159 each coordinate [4Fe-4S] cluster. S-adenosyl-L-methionine-binding positions include 217–218, S249, 271–273, and N348; these read GE and SLH. The active-site S-methylcysteine intermediate is the C391.

The protein belongs to the radical SAM superfamily. RlmN family. It depends on [4Fe-4S] cluster as a cofactor.

Its subcellular location is the cytoplasm. The enzyme catalyses adenosine(2503) in 23S rRNA + 2 reduced [2Fe-2S]-[ferredoxin] + 2 S-adenosyl-L-methionine = 2-methyladenosine(2503) in 23S rRNA + 5'-deoxyadenosine + L-methionine + 2 oxidized [2Fe-2S]-[ferredoxin] + S-adenosyl-L-homocysteine. It carries out the reaction adenosine(37) in tRNA + 2 reduced [2Fe-2S]-[ferredoxin] + 2 S-adenosyl-L-methionine = 2-methyladenosine(37) in tRNA + 5'-deoxyadenosine + L-methionine + 2 oxidized [2Fe-2S]-[ferredoxin] + S-adenosyl-L-homocysteine. Specifically methylates position 2 of adenine 2503 in 23S rRNA and position 2 of adenine 37 in tRNAs. m2A2503 modification seems to play a crucial role in the proofreading step occurring at the peptidyl transferase center and thus would serve to optimize ribosomal fidelity. The protein is Dual-specificity RNA methyltransferase RlmN of Methylobacterium radiotolerans (strain ATCC 27329 / DSM 1819 / JCM 2831 / NBRC 15690 / NCIMB 10815 / 0-1).